A 437-amino-acid polypeptide reads, in one-letter code: Phosphatidylserine decarboxylase proenzyme 1, mitochondrial (437 aa).

A mitochondrion-targeting transit peptide spans 1–18 (MLKFHRNVKPQFGAFARY). Over 19–38 (SSLGKHNSRKRVGIIRLAYG) the chain is Mitochondrial matrix. A helical membrane pass occupies residues 39–57 (LTGIGLVGLAGFAWAQDRH). Residues 58-437 (EKTYQKKGVQ…PLGRVVPSSH (380 aa)) lie on the Mitochondrial intermembrane side of the membrane. Catalysis depends on charge relay system; for autoendoproteolytic cleavage activity residues aspartate 157, histidine 287, and serine 401. Serine 401 (schiff-base intermediate with substrate; via pyruvic acid; for decarboxylase activity) is an active-site residue. At serine 401 the chain carries Pyruvic acid (Ser); by autocatalysis.

This sequence belongs to the phosphatidylserine decarboxylase family. PSD-B subfamily. Eukaryotic type I sub-subfamily. Heterodimer of a large membrane-associated beta subunit and a small pyruvoyl-containing alpha subunit. The cofactor is pyruvate. In terms of processing, is synthesized initially as an inactive proenzyme. Formation of the active enzyme involves a self-maturation process in which the active site pyruvoyl group is generated from an internal serine residue via an autocatalytic post-translational modification. Two non-identical subunits are generated from the proenzyme in this reaction, and the pyruvate is formed at the N-terminus of the alpha chain, which is derived from the carboxyl end of the proenzyme. The autoendoproteolytic cleavage occurs by a canonical serine protease mechanism, in which the side chain hydroxyl group of the serine supplies its oxygen atom to form the C-terminus of the beta chain, while the remainder of the serine residue undergoes an oxidative deamination to produce ammonia and the pyruvoyl prosthetic group on the alpha chain. During this reaction, the Ser that is part of the protease active site of the proenzyme becomes the pyruvoyl prosthetic group, which constitutes an essential element of the active site of the mature decarboxylase.

The protein localises to the mitochondrion. The protein resides in the mitochondrion inner membrane. It carries out the reaction a 1,2-diacyl-sn-glycero-3-phospho-L-serine + H(+) = a 1,2-diacyl-sn-glycero-3-phosphoethanolamine + CO2. Its pathway is phospholipid metabolism; phosphatidylethanolamine biosynthesis; phosphatidylethanolamine from CDP-diacylglycerol: step 2/2. In terms of biological role, catalyzes the formation of phosphatidylethanolamine (PtdEtn) from phosphatidylserine (PtdSer). Plays a central role in phospholipid metabolism and in the interorganelle trafficking of phosphatidylserine. Together with psd2 and psd3, responsible for the majority of phosphatidylethanolamine synthesis. The chain is Phosphatidylserine decarboxylase proenzyme 1, mitochondrial from Schizosaccharomyces pombe (strain 972 / ATCC 24843) (Fission yeast).